The primary structure comprises 334 residues: MKTLGEFIVEKQQDFSHATGELTALLSAIKLGAKIIHRDINKAGLVDILGTSGVSNVQGEVQMKLDLYANEKLKAALKARGEVAGIASEEEDDIVIFEGDRAENAKYVVLMDPLDGSSNIDVNVSVGTIFSIYRRITPIGQPVTEKDFLQPGHRQVAAGYVVYGSSTMLVYTTGCGVHAFTYDPSLGVFCLSHEKVQFPPNGNMYSINEGNYIKFPMGVKKYIKYCQEQDEATQRPYTTRYIGSLVADFHRNLLKGGIYIYPSTASHPSGKLRLLYECNPMAFLAEQAGGKASDGANRILDITPSKLHQRVPFFVGSKSMVEKAESFMAEFPDE.

Residues glutamate 89, aspartate 112, leucine 114, and aspartate 115 each contribute to the Mg(2+) site. Residues 115–118 (DGSS), asparagine 208, tyrosine 241, and lysine 271 contribute to the substrate site. Residue glutamate 277 participates in Mg(2+) binding.

It belongs to the FBPase class 1 family. As to quaternary structure, homotetramer. Mg(2+) is required as a cofactor.

The protein resides in the cytoplasm. It carries out the reaction beta-D-fructose 1,6-bisphosphate + H2O = beta-D-fructose 6-phosphate + phosphate. It participates in carbohydrate biosynthesis; gluconeogenesis. This Photorhabdus laumondii subsp. laumondii (strain DSM 15139 / CIP 105565 / TT01) (Photorhabdus luminescens subsp. laumondii) protein is Fructose-1,6-bisphosphatase class 1.